Consider the following 215-residue polypeptide: MKKIILNLVTAIILAGCSSNPETLKATNDSFQKSETSIPHFSPLATGGVQLPKADDSYSLPNIEVKKGEDIDIRPPLIPLAIIQNSITKFDGERSLIVYPKQQAKLYNLQQVERLLKEEGISSTTDGSILTTDWAKTERIGDKSIEIKYQIEQVMTADVSALTVSILHMRRDGIIFTPNVSDKQYYTSERLNRIVLTLTTAYNKQLRDLSSTLIQ.

The signal sequence occupies residues 1 to 16 (MKKIILNLVTAIILAG). A lipid anchor (N-palmitoyl cysteine) is attached at cysteine 17. Cysteine 17 is lipidated: S-diacylglycerol cysteine.

This sequence belongs to the BamC family.

It is found in the cell outer membrane. This chain is Outer membrane protein assembly factor BamC homolog, found in Haemophilus influenzae (strain ATCC 51907 / DSM 11121 / KW20 / Rd).